Here is a 251-residue protein sequence, read N- to C-terminus: MLGSPLLTFPPLDEGILVKRYKRFLADVELVSGEIVTAHCANTGPMTGVLHPGGRVRIRHAPSPKRKLAWTWEQAEAPSAQGGLCWVGINTALANSLIRAAIEAGHLKQVLGPIAAIRAEVTYGSNRRSRIDLFLTPDANCSDTRPIYLEVKNTTWIEDSLALFPDTVTERGQKHLKELIGVLPESRAVLVPCLSRHDVQAFAPGDSADPRYGELFRLALTAGVEVIPCCFGFHLDKITWEGLRPTKTTQS.

Belongs to the SfsA family.

The protein is Sugar fermentation stimulation protein homolog of Prochlorococcus marinus (strain MIT 9313).